Consider the following 71-residue polypeptide: uncharacterized protein (71 aa).

A helical membrane pass occupies residues 37–57 (IGVGVSDGVSAGVGVGVAMII).

It localises to the membrane. This is an uncharacterized protein from Dictyostelium discoideum (Social amoeba).